Here is a 512-residue protein sequence, read N- to C-terminus: Maturase K (512 aa).

It belongs to the intron maturase 2 family. MatK subfamily.

The protein localises to the plastid. It localises to the chloroplast. Functionally, usually encoded in the trnK tRNA gene intron. Probably assists in splicing its own and other chloroplast group II introns. The sequence is that of Maturase K from Ginkgo biloba (Ginkgo).